We begin with the raw amino-acid sequence, 399 residues long: Acetylornithine aminotransferase (399 aa).

Pyridoxal 5'-phosphate-binding positions include 102–103 (GA) and Phe135. Residue Arg138 participates in N(2)-acetyl-L-ornithine binding. 220–223 (DEIQ) contacts pyridoxal 5'-phosphate. Lys249 is modified (N6-(pyridoxal phosphate)lysine). Residue Ser277 coordinates N(2)-acetyl-L-ornithine. Thr278 is a binding site for pyridoxal 5'-phosphate.

It belongs to the class-III pyridoxal-phosphate-dependent aminotransferase family. ArgD subfamily. Homodimer. Requires pyridoxal 5'-phosphate as cofactor.

It is found in the cytoplasm. It catalyses the reaction N(2)-acetyl-L-ornithine + 2-oxoglutarate = N-acetyl-L-glutamate 5-semialdehyde + L-glutamate. It participates in amino-acid biosynthesis; L-arginine biosynthesis; N(2)-acetyl-L-ornithine from L-glutamate: step 4/4. In Oceanobacillus iheyensis (strain DSM 14371 / CIP 107618 / JCM 11309 / KCTC 3954 / HTE831), this protein is Acetylornithine aminotransferase.